We begin with the raw amino-acid sequence, 161 residues long: Blue copper protein 1a (161 aa).

The first 23 residues, M1–A23, serve as a signal peptide directing secretion. Residues T24–A124 enclose the Phytocyanin domain. Position 64 (H64) interacts with Cu cation. Residue N70 is glycosylated (N-linked (GlcNAc...) asparagine). C77 and C111 are joined by a disulfide. 3 residues coordinate Cu cation: C105, H110, and M116. The helical transmembrane segment at V141–A161 threads the bilayer.

It localises to the membrane. This is Blue copper protein 1a from Medicago truncatula (Barrel medic).